Consider the following 201-residue polypeptide: Large ribosomal subunit protein bL25 (201 aa).

Residues 181-201 (APRESEEEAEEEATETAKESE) form a disordered region. Positions 185–194 (SEEEAEEEAT) are enriched in acidic residues.

Belongs to the bacterial ribosomal protein bL25 family. CTC subfamily. As to quaternary structure, part of the 50S ribosomal subunit; part of the 5S rRNA/L5/L18/L25 subcomplex. Contacts the 5S rRNA. Binds to the 5S rRNA independently of L5 and L18.

Its function is as follows. This is one of the proteins that binds to the 5S RNA in the ribosome where it forms part of the central protuberance. The sequence is that of Large ribosomal subunit protein bL25 from Thermoanaerobacter pseudethanolicus (strain ATCC 33223 / 39E) (Clostridium thermohydrosulfuricum).